The primary structure comprises 523 residues: MSFKVNWKSLETDSLTSWTKDLLTSALNSGKSPNILASSISIKDLNFGKIAPNFEILEIGELGRDRFRGIFKINYEGDFHLTLHTNVQANPLNIYYSNSMEKEIDSQFVTPNFLLSNEQFALPLDLKLSDIKISGIGIIVFSKSKGLTLVFRNDPLDSIKVSSTFDTVQVLANFLQKQIETQIRDLFRETLPTLIHQFSLKYLSLDNNSDDLHAHFASSSRTHSSALDPDNEFNNFTYSSKNLQKNLQLFNTRETLDLHIPKFKGIIQRSHLEKFTQNYPSLLNSLYLNLHEIDMKSYNTYNNNTGSNGIPIDLLINDKNFNRTNRVLKEISDIQSNSFYKQSNNNKDTTVKPKRRRIKYSTRKKAASPTSTLINDDFHMASLHSSVASSMPMSMSSSLSDSEERPQLLAQPRPMRISPDFYQAFLKSTPEQCWYQCKRVGLGTNYFNFATSQPISTSPIKKDPARDFIKEKKSINYIDINKVNNKLKELSMDRSGKRKQRNYGSATYESENPIVAPPPPYSH.

The SMP-LTD domain occupies M1 to L200. The tract at residues E489–H523 is disordered.

The protein belongs to the MDM34 family. As to quaternary structure, component of the ER-mitochondria encounter structure (ERMES) or MDM complex, composed of MMM1, MDM10, MDM12 and MDM34.

The protein resides in the mitochondrion outer membrane. Component of the ERMES/MDM complex, which serves as a molecular tether to connect the endoplasmic reticulum (ER) and mitochondria. Components of this complex are involved in the control of mitochondrial shape and protein biogenesis, and function in nonvesicular lipid trafficking between the ER and mitochondria. MDM34 is required for the interaction of the ER-resident membrane protein MMM1 and the outer mitochondrial membrane-resident beta-barrel protein MDM10. The chain is Mitochondrial distribution and morphology protein 34 from Scheffersomyces stipitis (strain ATCC 58785 / CBS 6054 / NBRC 10063 / NRRL Y-11545) (Yeast).